The sequence spans 929 residues: Lon protease homolog 2, peroxisomal (929 aa).

Residues 11–257 enclose the Lon N-terminal domain; it reads LPLVPLPKGS…RVVEILTRQL (247 aa). The interval 302-325 is disordered; it reads GLTPPGLSAGRNNDNDDKESNEVD. ATP is bound at residue 484–491; it reads GPPGVGKT. One can recognise a Lon proteolytic domain in the interval 727–914; sequence HGRPGVVTGL…WEAIRQVWPD (188 aa). Residues Ser-820 and Lys-863 contribute to the active site. The short motif at 927–929 is the Microbody targeting signal element; sequence SRL.

This sequence belongs to the peptidase S16 family.

The protein resides in the peroxisome matrix. The enzyme catalyses Hydrolysis of proteins in presence of ATP.. Functionally, ATP-dependent serine protease that mediates the selective degradation of misfolded and unassembled polypeptides in the peroxisomal matrix. Necessary for type 2 peroxisome targeting signal (PTS2)-containing protein processing and facilitates peroxisome matrix protein import. This Aspergillus niger (strain ATCC MYA-4892 / CBS 513.88 / FGSC A1513) protein is Lon protease homolog 2, peroxisomal.